The chain runs to 338 residues: Ribosomal RNA large subunit methyltransferase F (338 aa).

The interval 1 to 21 is disordered; that stretch reads MTQKKNKPTQKKKGLHPRNPH.

Belongs to the methyltransferase superfamily. METTL16/RlmF family.

It localises to the cytoplasm. The catalysed reaction is adenosine(1618) in 23S rRNA + S-adenosyl-L-methionine = N(6)-methyladenosine(1618) in 23S rRNA + S-adenosyl-L-homocysteine + H(+). Its function is as follows. Specifically methylates the adenine in position 1618 of 23S rRNA. This is Ribosomal RNA large subunit methyltransferase F from Photobacterium profundum (strain SS9).